The following is a 221-amino-acid chain: uncharacterized protein (221 aa).

Helical transmembrane passes span threonine 41 to isoleucine 63, alanine 78 to serine 100, isoleucine 141 to leucine 163, and leucine 178 to phenylalanine 200.

The protein localises to the cell membrane. This is an uncharacterized protein from Archaeoglobus fulgidus (strain ATCC 49558 / DSM 4304 / JCM 9628 / NBRC 100126 / VC-16).